Here is an 86-residue protein sequence, read N- to C-terminus: Neurotoxin homolog NL1 (86 aa).

Residues 1–21 (MKTLLLTLVVVTMVCMDLGYT) form the signal peptide. Disulfide bonds link Cys24/Cys45, Cys38/Cys62, Cys66/Cys78, and Cys79/Cys84.

Belongs to the three-finger toxin family. Short-chain subfamily. Orphan group VIII (haditoxin) sub-subfamily. As to quaternary structure, homodimer; non-covalently linked. As to expression, expressed by the venom gland.

It is found in the secreted. In terms of biological role, antagonist of muscle and neuronal nicotinic acetylcholine receptors (nAChR) with highest affinity for neuronal alpha-7/CHRNA7 nAChRs. The chain is Neurotoxin homolog NL1 from Naja atra (Chinese cobra).